The sequence spans 93 residues: Phosphoribosyl-ATP pyrophosphatase (93 aa).

This sequence belongs to the PRA-PH family.

It localises to the cytoplasm. The catalysed reaction is 1-(5-phospho-beta-D-ribosyl)-ATP + H2O = 1-(5-phospho-beta-D-ribosyl)-5'-AMP + diphosphate + H(+). The protein operates within amino-acid biosynthesis; L-histidine biosynthesis; L-histidine from 5-phospho-alpha-D-ribose 1-diphosphate: step 2/9. The sequence is that of Phosphoribosyl-ATP pyrophosphatase from Mycolicibacterium gilvum (strain PYR-GCK) (Mycobacterium gilvum (strain PYR-GCK)).